We begin with the raw amino-acid sequence, 142 residues long: Transcription antitermination protein NusB (142 aa).

Belongs to the NusB family.

In terms of biological role, involved in transcription antitermination. Required for transcription of ribosomal RNA (rRNA) genes. Binds specifically to the boxA antiterminator sequence of the ribosomal RNA (rrn) operons. The chain is Transcription antitermination protein NusB from Buchnera aphidicola subsp. Cinara cedri (strain Cc).